We begin with the raw amino-acid sequence, 273 residues long: Formamidopyrimidine-DNA glycosylase (273 aa).

The active-site Schiff-base intermediate with DNA is the Pro2. The active-site Proton donor is Glu3. Lys58 (proton donor; for beta-elimination activity) is an active-site residue. DNA contacts are provided by His92, Arg111, and Lys153. An FPG-type zinc finger spans residues 238–272 (KVYGREGQSCLSCSSTIIKIKHSGRSTFYCKTCQY). Arg262 acts as the Proton donor; for delta-elimination activity in catalysis.

This sequence belongs to the FPG family. In terms of assembly, monomer. Requires Zn(2+) as cofactor.

The enzyme catalyses Hydrolysis of DNA containing ring-opened 7-methylguanine residues, releasing 2,6-diamino-4-hydroxy-5-(N-methyl)formamidopyrimidine.. The catalysed reaction is 2'-deoxyribonucleotide-(2'-deoxyribose 5'-phosphate)-2'-deoxyribonucleotide-DNA = a 3'-end 2'-deoxyribonucleotide-(2,3-dehydro-2,3-deoxyribose 5'-phosphate)-DNA + a 5'-end 5'-phospho-2'-deoxyribonucleoside-DNA + H(+). Functionally, involved in base excision repair of DNA damaged by oxidation or by mutagenic agents. Acts as a DNA glycosylase that recognizes and removes damaged bases. Has a preference for oxidized purines, such as 7,8-dihydro-8-oxoguanine (8-oxoG). Has AP (apurinic/apyrimidinic) lyase activity and introduces nicks in the DNA strand. Cleaves the DNA backbone by beta-delta elimination to generate a single-strand break at the site of the removed base with both 3'- and 5'-phosphates. This chain is Formamidopyrimidine-DNA glycosylase, found in Rickettsia africae (strain ESF-5).